A 62-amino-acid polypeptide reads, in one-letter code: Sucrase-isomaltase, intestinal (62 aa).

The Cytoplasmic segment spans residues 2–12 (ARKKFSGLEIX). Ser7 carries the post-translational modification Phosphoserine; by PKA. The chain crosses the membrane as a helical; Signal-anchor for type II membrane protein span at residues 13 to 32 (LIVLFAIVLSIAIALVVVXA). At 33 to 38 (SKXPAV) the chain is on the lumenal side. The residue at position 59 (Tyr59) is a Sulfotyrosine.

This sequence belongs to the glycosyl hydrolase 31 family. The resulting sucrase and isomaltase subunits stay associated with one another in a complex by non-covalent linkages. Post-translationally, the precursor is proteolytically cleaved when exposed to pancreatic proteases in the intestinal lumen. Sulfated.

It localises to the apical cell membrane. It carries out the reaction Hydrolysis of sucrose and maltose by an alpha-D-glucosidase-type action.. The enzyme catalyses Hydrolysis of (1-&gt;6)-alpha-D-glucosidic linkages in some oligosaccharides produced from starch and glycogen by alpha-amylase, and in isomaltose.. In terms of biological role, plays an important role in the final stage of carbohydrate digestion. Isomaltase activity is specific for both alpha-1,4- and alpha-1,6-oligosaccharides. This is Sucrase-isomaltase, intestinal (SI) from Sus scrofa (Pig).